Here is a 398-residue protein sequence, read N- to C-terminus: Succinate--CoA ligase [ADP-forming] subunit beta (398 aa).

The ATP-grasp domain occupies 9-254 (KRLLHEYGAP…LSEEDPKEIE (246 aa)). ATP-binding positions include Lys-46, 53 to 55 (GRG), Glu-109, Ala-112, and Glu-117. Mg(2+)-binding residues include Asn-209 and Asp-223. Residues Asn-274 and 331–333 (GIM) each bind substrate.

This sequence belongs to the succinate/malate CoA ligase beta subunit family. As to quaternary structure, heterotetramer of two alpha and two beta subunits. Requires Mg(2+) as cofactor.

It carries out the reaction succinate + ATP + CoA = succinyl-CoA + ADP + phosphate. The catalysed reaction is GTP + succinate + CoA = succinyl-CoA + GDP + phosphate. It participates in carbohydrate metabolism; tricarboxylic acid cycle; succinate from succinyl-CoA (ligase route): step 1/1. Its function is as follows. Succinyl-CoA synthetase functions in the citric acid cycle (TCA), coupling the hydrolysis of succinyl-CoA to the synthesis of either ATP or GTP and thus represents the only step of substrate-level phosphorylation in the TCA. The beta subunit provides nucleotide specificity of the enzyme and binds the substrate succinate, while the binding sites for coenzyme A and phosphate are found in the alpha subunit. The polypeptide is Succinate--CoA ligase [ADP-forming] subunit beta (Bartonella quintana (strain Toulouse) (Rochalimaea quintana)).